The following is a 1388-amino-acid chain: MSRPPPTGKMPGAPETAPGDGAGASRQRKLEALIRDPRSPINVESLLDGLNSLVLDLDFPALRKNKNIDNFLNRYEKIVKKIRGLQMKAEDYDVVKVIGRGAFGEVQLVRHKASQKVYAMKLLSKFEMIKRSDSAFFWEERDIMAFANSPWVVQLFYAFQDDRYLYMVMEYMPGGDLVNLMSNYDVPEKWAKFYTAEVVLALDAIHSMGLIHRDVKPDNMLLDKHGHLKLADFGTCMKMDETGMVHCDTAVGTPDYISPEVLKSQGGDGFYGRECDWWSVGVFLYEMLVGDTPFYADSLVGTYSKIMDHKNSLCFPEDAEISKHAKNLICAFLTDREVRLGRNGVEEIRQHPFFKNDQWHWDNIRETAAPVVPELSSDIDSSNFDDIEDDKGDVETFPIPKAFVGNQLPFIGFTYYRENLLLSDSPSCRETDSIQSRKNEESQEIQKKLYTLEEHLSNEMQAKEELEQKCKSVNTRLEKTAKELEEEITLRKSVESALRQLEREKALLQHKNAEYQRKADHEADKKRNLENDVNSLKDQLEDLKKRNQNSQISTEKVNQLQRQLDETNALLRTESDTAARLRKTQAESSKQIQQLESNNRDLQDKNCLLETAKLKLEKEFINLQSALESERRDRTHGSEIINDLQGRICGLEEDLKNGKILLAKVELEKRQLQERFTDLEKEKSNMEIDMTYQLKVIQQSLEQEEAEHKATKARLADKNKIYESIEEAKSEAMKEMEKKLLEERTLKQKVENLLLEAEKRCSLLDCDLKQSQQKINELLKQKDVLNEDVRNLTLKIEQETQKRCLTQNDLKMQTQQVNTLKMSEKQLKQENNHLMEMKMNLEKQNAELRKERQDADGQMKELQDQLEAEQYFSTLYKTQVRELKEECEEKTKLGKELQQKKQELQDERDSLAAQLEITLTKADSEQLARSIAEEQYSDLEKEKIMKELEIKEMMARHKQELTEKDATIASLEETNRTLTSDVANLANEKEELNNKLKDVQEQLSRLKDEEISAAAIKAQFEKQLLTERTLKTQAVNKLAEIMNRKEPVKRGNDTDVRRKEKENRKLHMELKSEREKLTQQMIKYQKELNEMQAQIAEESQIRIELQMTLDSKDSDIEQLRSQLQALHIGLDSSSIGSGPGDAEADDGFPESRLEGWLSLPVRNNTKKFGWVKKYVIVSSKKILFYDSEQDKEQSNPYMVLDIDKLFHVRPVTQTDVYRADAKEIPRIFQILYANEGESKKEQEFPVEPVGEKSNYICHKGHEFIPTLYHFPTNCEACMKPLWHMFKPPPALECRRCHIKCHKDHMDKKEEIIAPCKVYYDISTAKNLLLLANSTEEQQKWVSRLVKKIPKKPPAPDPFARSSPRTSMKIQQNQSIRRPSRQLAPNKPS.

Positions 1-27 (MSRPPPTGKMPGAPETAPGDGAGASRQ) are disordered. The region spanning 92–354 (YDVVKVIGRG…VEEIRQHPFF (263 aa)) is the Protein kinase domain. Residues 98 to 106 (IGRGAFGEV) and lysine 121 each bind ATP. Aspartate 214 acts as the Proton acceptor in catalysis. An AGC-kinase C-terminal domain is found at 357–425 (DQWHWDNIRE…YRENLLLSDS (69 aa)). Residues 363–784 (NIRETAAPVV…INELLKQKDV (422 aa)) form an interaction with PPP1R12A region. An interaction with NPM1 region spans residues 373–420 (PELSSDIDSSNFDDIEDDKGDVETFPIPKAFVGNQLPFIGFTYYRENL). The residue at position 414 (threonine 414) is a Phosphothreonine; by ROCK2. 2 coiled-coil regions span residues 429–1024 (RETD…EKQL) and 1053–1131 (DTDV…IGLD). Residues 497–573 (ALRQLEREKA…LDETNALLRT (77 aa)) form the REM-1 domain. The residue at position 722 (tyrosine 722) is a Phosphotyrosine; by SRC. Residues 979-1047 (TSDVANLANE…LAEIMNRKEP (69 aa)) enclose the RhoBD domain. Residues 979–1047 (TSDVANLANE…LAEIMNRKEP (69 aa)) are RHOA binding. Serine 1137 bears the Phosphoserine mark. The PH domain occupies 1150–1349 (ESRLEGWLSL…WVSRLVKKIP (200 aa)). A Phosphothreonine modification is found at threonine 1212. The Phorbol-ester/DAG-type zinc finger occupies 1260 to 1315 (GHEFIPTLYHFPTNCEACMKPLWHMFKPPPALECRRCHIKCHKDHMDKKEEIIAPC). Residues 1345 to 1388 (VKKIPKKPPAPDPFARSSPRTSMKIQQNQSIRRPSRQLAPNKPS) are disordered. Phosphoserine is present on residues serine 1362 and serine 1374. A compositionally biased stretch (polar residues) spans 1362 to 1376 (SPRTSMKIQQNQSIR).

This sequence belongs to the protein kinase superfamily. AGC Ser/Thr protein kinase family. In terms of assembly, homodimer. Interacts with IRS1. Interacts with RAF1. Interacts with RHOA (activated by GTP), RHOB and RHOC. Interacts with PPP1R12A. Interacts with EP300. Interacts with CHORDC1. Interacts with BRCA2. Interacts with NPM1; this interaction enhances ROCK2 activity. Interacts with SORL1. Interacts with PJVK. Requires Mg(2+) as cofactor. Post-translationally, phosphorylation at Tyr-722 reduces its binding to RHOA and is crucial for focal adhesion dynamics. Dephosphorylation by PTPN11 stimulates its RHOA binding activity. Cleaved by granzyme B during apoptosis. This leads to constitutive activation of the kinase and membrane blebbing. In terms of tissue distribution, expressed in the brain (at protein level).

It localises to the cytoplasm. Its subcellular location is the cell membrane. It is found in the nucleus. The protein resides in the cytoskeleton. The protein localises to the microtubule organizing center. It localises to the centrosome. The enzyme catalyses L-seryl-[protein] + ATP = O-phospho-L-seryl-[protein] + ADP + H(+). It carries out the reaction L-threonyl-[protein] + ATP = O-phospho-L-threonyl-[protein] + ADP + H(+). With respect to regulation, activated by RHOA binding. Inhibited by Y-27632. Its function is as follows. Protein kinase which is a key regulator of actin cytoskeleton and cell polarity. Involved in regulation of smooth muscle contraction, actin cytoskeleton organization, stress fiber and focal adhesion formation, neurite retraction, cell adhesion and motility via phosphorylation of ADD1, BRCA2, CNN1, EZR, DPYSL2, EP300, MSN, MYL9/MLC2, NPM1, RDX, PPP1R12A and VIM. Phosphorylates SORL1 and IRF4. Acts as a negative regulator of VEGF-induced angiogenic endothelial cell activation. Positively regulates the activation of p42/MAPK1-p44/MAPK3 and of p90RSK/RPS6KA1 during myogenic differentiation. Plays an important role in the timely initiation of centrosome duplication. Inhibits keratinocyte terminal differentiation. May regulate closure of the eyelids and ventral body wall through organization of actomyosin bundles. Plays a critical role in the regulation of spine and synaptic properties in the hippocampus. Plays an important role in generating the circadian rhythm of the aortic myofilament Ca(2+) sensitivity and vascular contractility by modulating the myosin light chain phosphorylation. In Homo sapiens (Human), this protein is Rho-associated protein kinase 2 (ROCK2).